A 102-amino-acid polypeptide reads, in one-letter code: Large ribosomal subunit protein bL21 (102 aa).

It belongs to the bacterial ribosomal protein bL21 family. Part of the 50S ribosomal subunit. Contacts protein L20.

Functionally, this protein binds to 23S rRNA in the presence of protein L20. This Bacillus anthracis (strain A0248) protein is Large ribosomal subunit protein bL21.